Here is a 152-residue protein sequence, read N- to C-terminus: Transcriptional regulator MraZ (152 aa).

2 SpoVT-AbrB domains span residues 5–52 (ATLV…PLPE) and 81–124 (ASEC…DETT).

It belongs to the MraZ family. Forms oligomers.

Its subcellular location is the cytoplasm. The protein resides in the nucleoid. Functionally, negatively regulates its own expression and that of the subsequent genes in the proximal part of the division and cell wall (dcw) gene cluster. Acts by binding directly to DNA. May also regulate the expression of genes outside the dcw cluster. This is Transcriptional regulator MraZ from Shigella sonnei (strain Ss046).